The sequence spans 644 residues: Protein FAM149B1 (644 aa).

3 disordered regions span residues 392 to 490 (NQSD…NTLL), 551 to 575 (TFRS…RPGR), and 609 to 644 (GHFP…RPGL). Basic and acidic residues predominate over residues 395–404 (DCRDSEDKVS). Over residues 449–459 (PITSSVTQPIT) the composition is skewed to polar residues. Residues 626-644 (QARSHNRGGSTARSSRPGL) show a composition bias toward polar residues.

Belongs to the FAM149 family.

The protein is Protein FAM149B1 (fam149b1) of Danio rerio (Zebrafish).